The following is a 579-amino-acid chain: Probable methyl-accepting chemotaxis protein BT9727_0355 (579 aa).

Topologically, residues 1-13 (MKKYWHKLSFLQK) are cytoplasmic. The chain crosses the membrane as a helical span at residues 14-34 (NVLLTVLVILTLVGTMGALSF). The Extracellular portion of the chain corresponds to 35-198 (NMFQNSMMSI…ASIVPSTKEK (164 aa)). The helical transmembrane segment at 199–219 (FIIQGLMFICISVLIATVIQF) threads the bilayer. Topologically, residues 220 to 579 (LIVRNALAPL…LQELIGEFKS (360 aa)) are cytoplasmic. The HAMP domain maps to 223–274 (RNALAPLRDLREGLRRVGEGDLNIKLEERSDDIGIINSYFNNTIEKFKGIID). Glutamate 289 carries the post-translational modification Glutamate methyl ester (Glu). The 237-residue stretch at 293-529 (STKENSMAVQ…NIVRVVNELS (237 aa)) folds into the Methyl-accepting transducer domain. Glutamate 548 is subject to Glutamate methyl ester (Glu).

It belongs to the methyl-accepting chemotaxis (MCP) protein family.

It localises to the cell membrane. In terms of biological role, chemotactic-signal transducers respond to changes in the concentration of attractants and repellents in the environment, transduce a signal from the outside to the inside of the cell, and facilitate sensory adaptation through the variation of the level of methylation. This Bacillus thuringiensis subsp. konkukian (strain 97-27) protein is Probable methyl-accepting chemotaxis protein BT9727_0355.